Consider the following 256-residue polypeptide: tRNA pseudouridine synthase A (256 aa).

Residue Asp-55 is the Nucleophile of the active site. Residue Tyr-113 participates in substrate binding.

The protein belongs to the tRNA pseudouridine synthase TruA family. As to quaternary structure, homodimer.

The catalysed reaction is uridine(38/39/40) in tRNA = pseudouridine(38/39/40) in tRNA. In terms of biological role, formation of pseudouridine at positions 38, 39 and 40 in the anticodon stem and loop of transfer RNAs. This Limosilactobacillus reuteri (strain DSM 20016) (Lactobacillus reuteri) protein is tRNA pseudouridine synthase A.